The following is a 140-amino-acid chain: Transmembrane protein 234 homolog (140 aa).

A run of 4 helical transmembrane segments spans residues 14-34 (IYAVLSILLVAIMWGATNPFI), 64-84 (WQYLLPLVINQLGSIVYVLTL), 88-108 (ELSLTVPMANSLTFVFTAITA), and 116-136 (SGWKIYCGMTLVILGTVICGL).

It belongs to the TMEM234 family.

The protein localises to the membrane. This chain is Transmembrane protein 234 homolog, found in Anopheles gambiae (African malaria mosquito).